Reading from the N-terminus, the 147-residue chain is MKVILLQDVKKIGKKGEVIEASDGYARNFLFPRKLAQEATDSNMHILNNKKENERKKKLAEIEAAQKLAGELKGKEITIKTKIGESGKLFGAITSKDIASLIKTQYNVEIDKKKIVMDTIKLAGNYDIEVKLYPEVSTKMKVNILPQ.

The protein belongs to the bacterial ribosomal protein bL9 family.

Binds to the 23S rRNA. This Clostridium botulinum (strain Alaska E43 / Type E3) protein is Large ribosomal subunit protein bL9.